The primary structure comprises 239 residues: Transmembrane ascorbate ferrireductase 1 (239 aa).

The Cytoplasmic portion of the chain corresponds to 1–7 (MAVRINA). A helical transmembrane segment spans residues 8–28 (MAVTFVAHALAVIAAIMVLVW). One can recognise a Cytochrome b561 domain in the interval 13-216 (VAHALAVIAA…FGAFVVLTAS (204 aa)). Residues 29–45 (SISYRGGLAWEATNKNL) lie on the Lumenal side of the membrane. Residues 46–66 (IFNLHPVLMLIGFIILGGEAI) form a helical membrane-spanning segment. Position 50 (histidine 50) interacts with heme b. The Cytoplasmic segment spans residues 67–81 (ISYKSLPLEKPVKKL). The helical transmembrane segment at 82–102 (IHLILHAIALALGIFGICAAF) threads the bilayer. The heme b site is built by histidine 83 and histidine 117. Residues 103-119 (KNHNESHIPNLYSLHSW) lie on the Lumenal side of the membrane. Residues 120–140 (IGIGVISLYGFQWVYSFIVFF) traverse the membrane as a helical segment. The Cytoplasmic portion of the chain corresponds to 141-155 (FPGGSTNLKSGLLPW). Position 156 (histidine 156) interacts with heme b. The helical transmembrane segment at 156–176 (HAMLGLFVYILAVGNAALGFL) threads the bilayer. At 177-193 (EKLTFLENGGLDKYGSE) the chain is on the lumenal side. A helical membrane pass occupies residues 194-214 (AFLINFTAIITILFGAFVVLT). At 215–239 (ASAESPSPSPSVSNDDSVDFSYSAI) the chain is on the cytoplasmic side. The tract at residues 217–239 (AESPSPSPSVSNDDSVDFSYSAI) is disordered. Residues 224-239 (PSVSNDDSVDFSYSAI) show a composition bias toward low complexity.

In terms of assembly, homodimer. It depends on heme b as a cofactor. Expressed in roots, seedlings and leaves. Lower expression in flowers. Expressed in the L1 layer of the shoot apex, in the epidermis of leaf primordia and young leaves and in vascular bundles. In the differentiation zone of the root, detected in the pericycle and in the epidermis, but not in the cortex. Strongly expressed in the lateral part of the root cap and in the epidermis of the root tip, but not in the meristematic tissue. Not expressed in lateral roots. In mature embryos, expressed in the epidermis, cotyledon tips and root tips.

It localises to the vacuole membrane. It carries out the reaction Fe(3+)(out) + L-ascorbate(in) = monodehydro-L-ascorbate radical(in) + Fe(2+)(out) + H(+). Its function is as follows. Two-heme-containing cytochrome. Catalyzes ascorbate-dependent trans-membrane ferric-chelate reduction. Able to use dihydrolipoic acid (DHLA) as an alternative substrate to ascorbate. This Arabidopsis thaliana (Mouse-ear cress) protein is Transmembrane ascorbate ferrireductase 1 (CYB561A).